Reading from the N-terminus, the 743-residue chain is Acetyl-coenzyme A synthetase, chloroplastic/glyoxysomal (743 aa).

A chloroplast-targeting transit peptide spans 1 to 84 (MKIGSPSSPI…LNAVVLGESL (84 aa)). D613 is an active-site residue.

It belongs to the ATP-dependent AMP-binding enzyme family. Expressed in leaves, flower buds and young flowers.

It localises to the plastid. The protein resides in the chloroplast. It is found in the glyoxysome. It catalyses the reaction acetate + ATP + CoA = acetyl-CoA + AMP + diphosphate. Its function is as follows. Catalyzes the production of acetyl-CoA, an activated form of acetate that can be used for lipid synthesis or for energy generation. May play a limited role in the biosynthesis of lipids. The sequence is that of Acetyl-coenzyme A synthetase, chloroplastic/glyoxysomal (ACS) from Arabidopsis thaliana (Mouse-ear cress).